The following is a 244-amino-acid chain: UPF0246 protein FMG_1068 (244 aa).

It belongs to the UPF0246 family.

This Finegoldia magna (strain ATCC 29328 / DSM 20472 / WAL 2508) (Peptostreptococcus magnus) protein is UPF0246 protein FMG_1068.